A 430-amino-acid polypeptide reads, in one-letter code: Corticosteroid-binding globulin (430 aa).

Residues 1–22 form the signal peptide; it reads MLLTLYTCLLWLSTSGLWTIQA. N-linked (GlcNAc...) asparagine glycans are attached at residues Asn-119, Asn-175, and Asn-243. Position 253 (Gln-253) interacts with cortisol. Asn-259 is a glycosylation site (N-linked (GlcNAc...) asparagine). Position 285 (Gln-285) interacts with cortisol. N-linked (GlcNAc...) asparagine glycosylation occurs at Asn-326. Position 392 (Trp-392) interacts with cortisol.

The protein belongs to the serpin family. In terms of tissue distribution, expressed by the liver; secreted in plasma.

It is found in the secreted. Its function is as follows. Major transport protein for glucocorticoids and progestins in the blood of almost all vertebrate species. In Ovis aries (Sheep), this protein is Corticosteroid-binding globulin (SERPINA6).